A 235-amino-acid polypeptide reads, in one-letter code: Probable GTP-binding protein EngB (235 aa).

Positions 23-219 constitute an EngB-type G domain; the sequence is QVPEIAFAGR…NDKIIELLGL (197 aa). GTP contacts are provided by residues 31–38, 58–62, 92–95, 159–162, and 193–200; these read GRSNAGKS, GRTQH, DLPG, TKSD, and FTAQMFSA. 2 residues coordinate Mg(2+): Ser-38 and Thr-60.

The protein belongs to the TRAFAC class TrmE-Era-EngA-EngB-Septin-like GTPase superfamily. EngB GTPase family. It depends on Mg(2+) as a cofactor.

Necessary for normal cell division and for the maintenance of normal septation. This chain is Probable GTP-binding protein EngB, found in Janthinobacterium sp. (strain Marseille) (Minibacterium massiliensis).